We begin with the raw amino-acid sequence, 100 residues long: NADH-quinone oxidoreductase subunit K (100 aa).

A run of 3 helical transmembrane segments spans residues 4–24 (LQHGLILAAILFVLGLTGLLI), 28–48 (LLFMLISLEIMINAAALAFVV), and 60–80 (VMYILAITLAAAEASIGLALL).

Belongs to the complex I subunit 4L family. NDH-1 is composed of 13 different subunits. Subunits NuoA, H, J, K, L, M, N constitute the membrane sector of the complex.

The protein localises to the cell inner membrane. It catalyses the reaction a quinone + NADH + 5 H(+)(in) = a quinol + NAD(+) + 4 H(+)(out). NDH-1 shuttles electrons from NADH, via FMN and iron-sulfur (Fe-S) centers, to quinones in the respiratory chain. The immediate electron acceptor for the enzyme in this species is believed to be ubiquinone. Couples the redox reaction to proton translocation (for every two electrons transferred, four hydrogen ions are translocated across the cytoplasmic membrane), and thus conserves the redox energy in a proton gradient. This chain is NADH-quinone oxidoreductase subunit K, found in Pectobacterium carotovorum subsp. carotovorum (strain PC1).